A 363-amino-acid chain; its full sequence is Zinc phosphodiesterase ELAC protein 1 (363 aa).

His62, His64, Asp66, His67, His182, Asp253, and His313 together coordinate Zn(2+). The active-site Proton acceptor is Asp66.

The protein belongs to the RNase Z family. Homodimer. Requires Zn(2+) as cofactor. In terms of tissue distribution, widely expressed. Expressed in heart, brain, placenta, lung, liver, skeletal muscle, kidney and pancreas.

The protein resides in the cytoplasm. Its subcellular location is the cytosol. It is found in the nucleus. The catalysed reaction is Endonucleolytic cleavage of RNA, removing extra 3' nucleotides from tRNA precursor, generating 3' termini of tRNAs. A 3'-hydroxy group is left at the tRNA terminus and a 5'-phosphoryl group is left at the trailer molecule.. Zinc phosphodiesterase, which displays some tRNA 3'-processing endonuclease activity. Specifically involved in tRNA repair: acts downstream of the ribosome-associated quality control (RQC) pathway by removing a 2',3'-cyclic phosphate from tRNAs following cleavage by ANKZF1. tRNAs are then processed by TRNT1. The protein is Zinc phosphodiesterase ELAC protein 1 of Homo sapiens (Human).